The primary structure comprises 112 residues: uncharacterized protein (112 aa).

This is an uncharacterized protein from Saccharomyces cerevisiae (strain ATCC 204508 / S288c) (Baker's yeast).